Consider the following 337-residue polypeptide: Tetraacyldisaccharide 4'-kinase (337 aa).

58 to 65 (TVGGSGKT) provides a ligand contact to ATP.

This sequence belongs to the LpxK family.

It catalyses the reaction a lipid A disaccharide + ATP = a lipid IVA + ADP + H(+). It participates in glycolipid biosynthesis; lipid IV(A) biosynthesis; lipid IV(A) from (3R)-3-hydroxytetradecanoyl-[acyl-carrier-protein] and UDP-N-acetyl-alpha-D-glucosamine: step 6/6. Its function is as follows. Transfers the gamma-phosphate of ATP to the 4'-position of a tetraacyldisaccharide 1-phosphate intermediate (termed DS-1-P) to form tetraacyldisaccharide 1,4'-bis-phosphate (lipid IVA). This is Tetraacyldisaccharide 4'-kinase from Shewanella putrefaciens (strain CN-32 / ATCC BAA-453).